A 162-amino-acid polypeptide reads, in one-letter code: Endoribonuclease YbeY (162 aa).

Zn(2+) contacts are provided by histidine 118, histidine 122, and histidine 128.

This sequence belongs to the endoribonuclease YbeY family. Zn(2+) is required as a cofactor.

It is found in the cytoplasm. Functionally, single strand-specific metallo-endoribonuclease involved in late-stage 70S ribosome quality control and in maturation of the 3' terminus of the 16S rRNA. This chain is Endoribonuclease YbeY, found in Caulobacter sp. (strain K31).